The chain runs to 218 residues: 2-C-methyl-D-erythritol 4-phosphate cytidylyltransferase (218 aa).

This sequence belongs to the IspD/TarI cytidylyltransferase family. IspD subfamily.

It catalyses the reaction 2-C-methyl-D-erythritol 4-phosphate + CTP + H(+) = 4-CDP-2-C-methyl-D-erythritol + diphosphate. Its pathway is isoprenoid biosynthesis; isopentenyl diphosphate biosynthesis via DXP pathway; isopentenyl diphosphate from 1-deoxy-D-xylulose 5-phosphate: step 2/6. Functionally, catalyzes the formation of 4-diphosphocytidyl-2-C-methyl-D-erythritol from CTP and 2-C-methyl-D-erythritol 4-phosphate (MEP). This Chlamydia muridarum (strain MoPn / Nigg) protein is 2-C-methyl-D-erythritol 4-phosphate cytidylyltransferase.